The following is a 188-amino-acid chain: dCTP deaminase (188 aa).

Residues 111-116 (KSTYAR), 135-137 (TLE), Gln-156, Tyr-170, and Gln-180 contribute to the dCTP site. The active-site Proton donor/acceptor is Glu-137.

The protein belongs to the dCTP deaminase family. As to quaternary structure, homotrimer.

The enzyme catalyses dCTP + H2O + H(+) = dUTP + NH4(+). The protein operates within pyrimidine metabolism; dUMP biosynthesis; dUMP from dCTP (dUTP route): step 1/2. Catalyzes the deamination of dCTP to dUTP. In Ralstonia pickettii (strain 12J), this protein is dCTP deaminase.